Here is a 110-residue protein sequence, read N- to C-terminus: Nucleoid-associated protein Ent638_0951 (110 aa).

Belongs to the YbaB/EbfC family. As to quaternary structure, homodimer.

It is found in the cytoplasm. The protein resides in the nucleoid. Its function is as follows. Binds to DNA and alters its conformation. May be involved in regulation of gene expression, nucleoid organization and DNA protection. The polypeptide is Nucleoid-associated protein Ent638_0951 (Enterobacter sp. (strain 638)).